The following is a 61-amino-acid chain: Bacteriocin mesentericin Y105 (61 aa).

Positions 1-24 are cleaved as a signal peptide; sequence MTNMKSVEAYQQLDNQNLKKVVGG. The cysteines at positions 33 and 38 are disulfide-linked.

Belongs to the bacteriocin class IIA/YGNGV family.

It localises to the secreted. In terms of biological role, bacteriocin active against Listeria monocytogenes. This chain is Bacteriocin mesentericin Y105 (mesY), found in Leuconostoc mesenteroides.